Reading from the N-terminus, the 267-residue chain is GTP cyclohydrolase FolE2 (267 aa).

Belongs to the GTP cyclohydrolase IV family.

The catalysed reaction is GTP + H2O = 7,8-dihydroneopterin 3'-triphosphate + formate + H(+). It participates in cofactor biosynthesis; 7,8-dihydroneopterin triphosphate biosynthesis; 7,8-dihydroneopterin triphosphate from GTP: step 1/1. Functionally, converts GTP to 7,8-dihydroneopterin triphosphate. The polypeptide is GTP cyclohydrolase FolE2 (Geobacter sp. (strain M21)).